The sequence spans 227 residues: Cytochrome c oxidase subunit 2 (227 aa).

At 1–14 (MAYPFQLGLQDATS) the chain is on the mitochondrial intermembrane side. A helical transmembrane segment spans residues 15–45 (PIMEELLHFHDHALMIVFLISSLVLYIISLM). Residues 46–59 (LTTKLTHTSTMDAQ) are Mitochondrial matrix-facing. A helical membrane pass occupies residues 60–87 (EVETVWTILPAIILILIALPSLRILYMM). The Mitochondrial intermembrane segment spans residues 88–227 (DEINNPSLTV…YFETWSALMV (140 aa)). Residues histidine 161, cysteine 196, glutamate 198, cysteine 200, histidine 204, and methionine 207 each coordinate Cu cation. Glutamate 198 contributes to the Mg(2+) binding site. Tyrosine 218 bears the Phosphotyrosine mark.

Belongs to the cytochrome c oxidase subunit 2 family. As to quaternary structure, component of the cytochrome c oxidase (complex IV, CIV), a multisubunit enzyme composed of 14 subunits. The complex is composed of a catalytic core of 3 subunits MT-CO1, MT-CO2 and MT-CO3, encoded in the mitochondrial DNA, and 11 supernumerary subunits COX4I, COX5A, COX5B, COX6A, COX6B, COX6C, COX7A, COX7B, COX7C, COX8 and NDUFA4, which are encoded in the nuclear genome. The complex exists as a monomer or a dimer and forms supercomplexes (SCs) in the inner mitochondrial membrane with NADH-ubiquinone oxidoreductase (complex I, CI) and ubiquinol-cytochrome c oxidoreductase (cytochrome b-c1 complex, complex III, CIII), resulting in different assemblies (supercomplex SCI(1)III(2)IV(1) and megacomplex MCI(2)III(2)IV(2)). Found in a complex with TMEM177, COA6, COX18, COX20, SCO1 and SCO2. Interacts with TMEM177 in a COX20-dependent manner. Interacts with COX20. Interacts with COX16. Cu cation is required as a cofactor.

The protein localises to the mitochondrion inner membrane. It carries out the reaction 4 Fe(II)-[cytochrome c] + O2 + 8 H(+)(in) = 4 Fe(III)-[cytochrome c] + 2 H2O + 4 H(+)(out). In terms of biological role, component of the cytochrome c oxidase, the last enzyme in the mitochondrial electron transport chain which drives oxidative phosphorylation. The respiratory chain contains 3 multisubunit complexes succinate dehydrogenase (complex II, CII), ubiquinol-cytochrome c oxidoreductase (cytochrome b-c1 complex, complex III, CIII) and cytochrome c oxidase (complex IV, CIV), that cooperate to transfer electrons derived from NADH and succinate to molecular oxygen, creating an electrochemical gradient over the inner membrane that drives transmembrane transport and the ATP synthase. Cytochrome c oxidase is the component of the respiratory chain that catalyzes the reduction of oxygen to water. Electrons originating from reduced cytochrome c in the intermembrane space (IMS) are transferred via the dinuclear copper A center (CU(A)) of subunit 2 and heme A of subunit 1 to the active site in subunit 1, a binuclear center (BNC) formed by heme A3 and copper B (CU(B)). The BNC reduces molecular oxygen to 2 water molecules using 4 electrons from cytochrome c in the IMS and 4 protons from the mitochondrial matrix. This is Cytochrome c oxidase subunit 2 (MT-CO2) from Canis aureus (Golden jackal).